Reading from the N-terminus, the 268-residue chain is Thymidylate synthase (268 aa).

Residues R26 and 131–132 (RR) contribute to the dUMP site. C151 (nucleophile) is an active-site residue. DUMP contacts are provided by residues 171 to 174 (RSAD), N182, and 212 to 214 (HIY). Residue D174 coordinates (6R)-5,10-methylene-5,6,7,8-tetrahydrofolate. S267 is a (6R)-5,10-methylene-5,6,7,8-tetrahydrofolate binding site.

It belongs to the thymidylate synthase family. Bacterial-type ThyA subfamily. In terms of assembly, homodimer.

The protein resides in the cytoplasm. The enzyme catalyses dUMP + (6R)-5,10-methylene-5,6,7,8-tetrahydrofolate = 7,8-dihydrofolate + dTMP. It participates in pyrimidine metabolism; dTTP biosynthesis. Functionally, catalyzes the reductive methylation of 2'-deoxyuridine-5'-monophosphate (dUMP) to 2'-deoxythymidine-5'-monophosphate (dTMP) while utilizing 5,10-methylenetetrahydrofolate (mTHF) as the methyl donor and reductant in the reaction, yielding dihydrofolate (DHF) as a by-product. This enzymatic reaction provides an intracellular de novo source of dTMP, an essential precursor for DNA biosynthesis. The protein is Thymidylate synthase of Corynebacterium aurimucosum (strain ATCC 700975 / DSM 44827 / CIP 107346 / CN-1) (Corynebacterium nigricans).